The sequence spans 206 residues: FMN-dependent NADH:quinone oxidoreductase (206 aa).

FMN contacts are provided by residues 15-17, 94-97, and 138-141; these read SVS, MYNF, and TRGG.

The protein belongs to the azoreductase type 1 family. In terms of assembly, homodimer. Requires FMN as cofactor.

It catalyses the reaction 2 a quinone + NADH + H(+) = 2 a 1,4-benzosemiquinone + NAD(+). The enzyme catalyses N,N-dimethyl-1,4-phenylenediamine + anthranilate + 2 NAD(+) = 2-(4-dimethylaminophenyl)diazenylbenzoate + 2 NADH + 2 H(+). Its function is as follows. Quinone reductase that provides resistance to thiol-specific stress caused by electrophilic quinones. Functionally, also exhibits azoreductase activity. Catalyzes the reductive cleavage of the azo bond in aromatic azo compounds to the corresponding amines. The chain is FMN-dependent NADH:quinone oxidoreductase from Rhizobium meliloti (strain 1021) (Ensifer meliloti).